We begin with the raw amino-acid sequence, 99 residues long: Malonate decarboxylase acyl carrier protein (99 aa).

Residue S25 is modified to O-(phosphoribosyl dephospho-coenzyme A)serine.

It belongs to the MdcC family. Post-translationally, covalently binds the prosthetic group of malonate decarboxylase.

It localises to the cytoplasm. Subunit of malonate decarboxylase, it is an acyl carrier protein to which acetyl and malonyl thioester residues are bound via a 2'-(5''-phosphoribosyl)-3'-dephospho-CoA prosthetic group and turn over during the catalytic mechanism. The protein is Malonate decarboxylase acyl carrier protein of Pseudomonas syringae pv. syringae (strain B728a).